Consider the following 337-residue polypeptide: tRNA N6-adenosine threonylcarbamoyltransferase (337 aa).

The Fe cation site is built by H111 and H115. Substrate contacts are provided by residues 134 to 138 (LVSGG), D167, G180, and N272. D300 is a Fe cation binding site.

This sequence belongs to the KAE1 / TsaD family. The cofactor is Fe(2+).

It localises to the cytoplasm. It carries out the reaction L-threonylcarbamoyladenylate + adenosine(37) in tRNA = N(6)-L-threonylcarbamoyladenosine(37) in tRNA + AMP + H(+). Required for the formation of a threonylcarbamoyl group on adenosine at position 37 (t(6)A37) in tRNAs that read codons beginning with adenine. Is involved in the transfer of the threonylcarbamoyl moiety of threonylcarbamoyl-AMP (TC-AMP) to the N6 group of A37, together with TsaE and TsaB. TsaD likely plays a direct catalytic role in this reaction. In Shewanella amazonensis (strain ATCC BAA-1098 / SB2B), this protein is tRNA N6-adenosine threonylcarbamoyltransferase.